The primary structure comprises 243 residues: Adenosylcobinamide-GDP ribazoletransferase (243 aa).

Helical transmembrane passes span 31-51 (LLFY…FSAL), 57-77 (LMLH…GLHL), 109-129 (IAVV…LALI), 135-155 (IGLL…FLGT), and 188-208 (VLLA…CFFW).

The protein belongs to the CobS family. It depends on Mg(2+) as a cofactor.

The protein resides in the cell inner membrane. The enzyme catalyses alpha-ribazole + adenosylcob(III)inamide-GDP = adenosylcob(III)alamin + GMP + H(+). It carries out the reaction alpha-ribazole 5'-phosphate + adenosylcob(III)inamide-GDP = adenosylcob(III)alamin 5'-phosphate + GMP + H(+). It participates in cofactor biosynthesis; adenosylcobalamin biosynthesis; adenosylcobalamin from cob(II)yrinate a,c-diamide: step 7/7. Its function is as follows. Joins adenosylcobinamide-GDP and alpha-ribazole to generate adenosylcobalamin (Ado-cobalamin). Also synthesizes adenosylcobalamin 5'-phosphate from adenosylcobinamide-GDP and alpha-ribazole 5'-phosphate. This chain is Adenosylcobinamide-GDP ribazoletransferase, found in Pseudomonas savastanoi pv. phaseolicola (strain 1448A / Race 6) (Pseudomonas syringae pv. phaseolicola (strain 1448A / Race 6)).